The following is a 138-amino-acid chain: Small ribosomal subunit protein uS11c (138 aa).

Positions 1–21 (MAKSISKIGSRKNARIGSRKQ) are disordered. Basic residues predominate over residues 9 to 21 (GSRKNARIGSRKQ).

It belongs to the universal ribosomal protein uS11 family. Part of the 30S ribosomal subunit.

The protein localises to the plastid. Its subcellular location is the chloroplast. The protein is Small ribosomal subunit protein uS11c of Cicer arietinum (Chickpea).